The primary structure comprises 333 residues: MNKLTTIESHFLQQQKLYPEINSEVTGLLNDVAFAAKLVRREVVRAGLADILGLAGSTNVQGEEVKKLDLFANERLINAIGQHGRFAIMGSEENEETITPPKFESGEYVLLFDPLDGSSNIDVNVSVGTIFSIYRLKSDNPSQASIEDCLQKGADQVAAGYVIYGSSVMLVYTTGHGVHGFTFDQTVGEFLLSHENITTPEHGKYYSVNEGSWNEFHDGTKLFLDYLKEEDKATGRPYSTRYIGSFVADFHRNLLTGGVFIYPATKKHKNGKLRLMYEANPMAFICEQAGGRATDGHRRILDIEPVELHQRTPLYIGSKNDVLIAEEFEQDKR.

Residues glutamate 92, aspartate 113, leucine 115, and aspartate 116 each coordinate Mg(2+). Substrate-binding positions include 116–119 (DGSS), asparagine 209, tyrosine 242, and lysine 272. Glutamate 278 is a binding site for Mg(2+).

Belongs to the FBPase class 1 family. Homotetramer. Mg(2+) is required as a cofactor.

It is found in the cytoplasm. It carries out the reaction beta-D-fructose 1,6-bisphosphate + H2O = beta-D-fructose 6-phosphate + phosphate. The protein operates within carbohydrate biosynthesis; Calvin cycle. The protein is Fructose-1,6-bisphosphatase class 1 of Chlorobaculum parvum (strain DSM 263 / NCIMB 8327) (Chlorobium vibrioforme subsp. thiosulfatophilum).